The primary structure comprises 391 residues: S-adenosylmethionine synthase (391 aa).

The disordered stretch occupies residues 1–20; it reads MPRSDYLFTSESVSEGHPDK. His17 contacts ATP. Residue Asp19 coordinates Mg(2+). Residue Glu45 coordinates K(+). L-methionine contacts are provided by Glu58 and Gln102. Residues 102–112 are flexible loop; sequence QSADIAQGVDA. Residues 169-171, 235-236, Asp244, 250-251, Ala267, and Lys271 each bind ATP; these read DAK, KF, and RK. Asp244 contacts L-methionine. Lys275 contributes to the L-methionine binding site.

Belongs to the AdoMet synthase family. As to quaternary structure, homotetramer; dimer of dimers. Mg(2+) is required as a cofactor. K(+) serves as cofactor.

It is found in the cytoplasm. The enzyme catalyses L-methionine + ATP + H2O = S-adenosyl-L-methionine + phosphate + diphosphate. Its pathway is amino-acid biosynthesis; S-adenosyl-L-methionine biosynthesis; S-adenosyl-L-methionine from L-methionine: step 1/1. Functionally, catalyzes the formation of S-adenosylmethionine (AdoMet) from methionine and ATP. The overall synthetic reaction is composed of two sequential steps, AdoMet formation and the subsequent tripolyphosphate hydrolysis which occurs prior to release of AdoMet from the enzyme. The polypeptide is S-adenosylmethionine synthase (Methylorubrum populi (strain ATCC BAA-705 / NCIMB 13946 / BJ001) (Methylobacterium populi)).